The primary structure comprises 339 residues: U11/U12 small nuclear ribonucleoprotein 48 kDa protein (339 aa).

The CHHC U11-48K-type zinc finger occupies 55 to 82 (VVICPYDSNHHMPKSSLAKHMASCRLRK). The Zn(2+) site is built by C58, H64, H74, and C78. Residues K87 and K104 each participate in a glycyl lysine isopeptide (Lys-Gly) (interchain with G-Cter in SUMO2) cross-link. A disordered region spans residues 255–339 (HWQEEQEKAE…HSHKRRKQKI (85 aa)). The segment covering 294–309 (RHRRDRSRSPHKRKRN) has biased composition (basic residues). Residues 310–328 (KDKDKNCESRRRKERDGER) show a composition bias toward basic and acidic residues. Basic residues predominate over residues 329-339 (HHSHKRRKQKI).

As to quaternary structure, component of the U11/U12 snRNPs that are part of the U12-type spliceosome. Not found in the major spliceosome.

The protein localises to the nucleus. Likely involved in U12-type 5' splice site recognition. The polypeptide is U11/U12 small nuclear ribonucleoprotein 48 kDa protein (SNRNP48) (Homo sapiens (Human)).